The sequence spans 840 residues: Leucine--tRNA ligase (840 aa).

Positions 44 to 55 (PYPSANGLHVGH) match the 'HIGH' region motif. Residues 617–621 (KMSKS) carry the 'KMSKS' region motif. Lysine 620 contacts ATP.

It belongs to the class-I aminoacyl-tRNA synthetase family.

The protein localises to the cytoplasm. The catalysed reaction is tRNA(Leu) + L-leucine + ATP = L-leucyl-tRNA(Leu) + AMP + diphosphate. The sequence is that of Leucine--tRNA ligase from Borreliella burgdorferi (strain ATCC 35210 / DSM 4680 / CIP 102532 / B31) (Borrelia burgdorferi).